A 388-amino-acid chain; its full sequence is Leucine aminopeptidase 1 (388 aa).

The N-terminal stretch at 1–19 is a signal peptide; that stretch reads MKSLSLLALAAIAPPAAVA. A propeptide spanning residues 20–88 is cleaved from the precursor; it reads AVVDRQVPFE…SAKSHERIQV (69 aa). Residue Asn180 is glycosylated (N-linked (GlcNAc...) asparagine). 4 residues coordinate Zn(2+): His188, Asp207, Glu246, and Asp273. Residues Cys322 and Cys326 are joined by a disulfide bond. His355 serves as a coordination point for Zn(2+).

It belongs to the peptidase M28 family. M28E subfamily. As to quaternary structure, monomer. It depends on Zn(2+) as a cofactor.

It localises to the secreted. Functionally, extracellular aminopeptidase that allows assimilation of proteinaceous substrates. The chain is Leucine aminopeptidase 1 (LAP1) from Coccidioides posadasii (strain C735) (Valley fever fungus).